We begin with the raw amino-acid sequence, 1391 residues long: DNA-directed RNA polymerase subunit beta' (1391 aa).

Residues Cys72, Cys74, Cys87, and Cys90 each coordinate Zn(2+). Positions 462, 464, and 466 each coordinate Mg(2+). Zn(2+) contacts are provided by Cys816, Cys890, Cys897, and Cys900.

It belongs to the RNA polymerase beta' chain family. As to quaternary structure, the RNAP catalytic core consists of 2 alpha, 1 beta, 1 beta' and 1 omega subunit. When a sigma factor is associated with the core the holoenzyme is formed, which can initiate transcription. Mg(2+) serves as cofactor. It depends on Zn(2+) as a cofactor.

The catalysed reaction is RNA(n) + a ribonucleoside 5'-triphosphate = RNA(n+1) + diphosphate. Functionally, DNA-dependent RNA polymerase catalyzes the transcription of DNA into RNA using the four ribonucleoside triphosphates as substrates. This is DNA-directed RNA polymerase subunit beta' from Neisseria gonorrhoeae (strain NCCP11945).